Here is a 488-residue protein sequence, read N- to C-terminus: L-arabinose isomerase 2 (488 aa).

4 residues coordinate Mn(2+): E306, E331, H348, and H447.

Belongs to the arabinose isomerase family. Mn(2+) is required as a cofactor.

The enzyme catalyses beta-L-arabinopyranose = L-ribulose. It functions in the pathway carbohydrate degradation; L-arabinose degradation via L-ribulose; D-xylulose 5-phosphate from L-arabinose (bacterial route): step 1/3. Functionally, catalyzes the conversion of L-arabinose to L-ribulose. This chain is L-arabinose isomerase 2, found in Clostridium acetobutylicum (strain ATCC 824 / DSM 792 / JCM 1419 / IAM 19013 / LMG 5710 / NBRC 13948 / NRRL B-527 / VKM B-1787 / 2291 / W).